The sequence spans 158 residues: Immunoglobulin J chain (158 aa).

The signal sequence occupies residues Met1 to Ala22. 3 disulfides stabilise this stretch: Cys36/Cys122, Cys95/Cys115, and Cys130/Cys155. Asn72 is a glycosylation site (N-linked (GlcNAc...) (complex) asparagine).

In terms of assembly, part of the secretory IgA (sIgA) complex that consists of two, four or five IgA monomers, and two additional non-Ig polypeptides, namely the JCHAIN and the secretory component (the proteolytic product of PIGR). Part of the secretory IgM (sIgM) complex that consist of five IgM monomers, and two additional non-Ig polypeptides, namely the JCHAIN and the secretory component (the proteolytic product of PIGR). JCHAIN-containing IgM interacts (via CH4 domain) with FCRM (via Ig-like domain). N-glycosylated. N-glycans attached to Asn-72 varies from truncated, differentially fucosylated to sialylated (NeuGc) complex types: Man3GlcNAc2; GlcNAc2Man3GlcNAc2(Fuc); Gal1GlcNAc1Man3GlcNAc2; GlcNAc2Man3GlcNAc2; GlcNAc1Man3GlcNAc2; GlcNAc1Man2GlcNAc2 and NeuGc1Gal1GlcNAc2Man3GlcNAc2.

The protein localises to the secreted. In terms of biological role, serves to link two monomer units of either IgM or IgA. In the case of IgM, the J chain-joined dimer is a nucleating unit for the IgM pentamer, and in the case of IgA it induces dimers and/or larger polymers. It also helps to bind these immunoglobulins to secretory component. The chain is Immunoglobulin J chain (JCHAIN) from Equus asinus (Donkey).